Consider the following 436-residue polypeptide: 3-ketoacyl-CoA thiolase (436 aa).

C99 acts as the Acyl-thioester intermediate in catalysis. Residues H392 and C422 each act as proton acceptor in the active site.

Belongs to the thiolase-like superfamily. Thiolase family. Heterotetramer of two alpha chains (FadJ) and two beta chains (FadI).

The protein resides in the cytoplasm. The enzyme catalyses an acyl-CoA + acetyl-CoA = a 3-oxoacyl-CoA + CoA. Its pathway is lipid metabolism; fatty acid beta-oxidation. Functionally, catalyzes the final step of fatty acid oxidation in which acetyl-CoA is released and the CoA ester of a fatty acid two carbons shorter is formed. The chain is 3-ketoacyl-CoA thiolase from Shewanella sp. (strain ANA-3).